We begin with the raw amino-acid sequence, 346 residues long: Phosphoribosylformylglycinamidine cyclo-ligase (346 aa).

It belongs to the AIR synthase family.

Its subcellular location is the cytoplasm. The catalysed reaction is 2-formamido-N(1)-(5-O-phospho-beta-D-ribosyl)acetamidine + ATP = 5-amino-1-(5-phospho-beta-D-ribosyl)imidazole + ADP + phosphate + H(+). It functions in the pathway purine metabolism; IMP biosynthesis via de novo pathway; 5-amino-1-(5-phospho-D-ribosyl)imidazole from N(2)-formyl-N(1)-(5-phospho-D-ribosyl)glycinamide: step 2/2. In Vibrio vulnificus (strain YJ016), this protein is Phosphoribosylformylglycinamidine cyclo-ligase.